Consider the following 1377-residue polypeptide: DNA-directed RNA polymerase subunit beta' (1377 aa).

The Zn(2+) site is built by cysteine 60, cysteine 62, cysteine 75, and cysteine 78. The Mg(2+) site is built by aspartate 449, aspartate 451, and aspartate 453. Positions 777, 851, 858, and 861 each coordinate Zn(2+).

This sequence belongs to the RNA polymerase beta' chain family. As to quaternary structure, the RNAP catalytic core consists of 2 alpha, 1 beta, 1 beta' and 1 omega subunit. When a sigma factor is associated with the core the holoenzyme is formed, which can initiate transcription. Requires Mg(2+) as cofactor. It depends on Zn(2+) as a cofactor.

It carries out the reaction RNA(n) + a ribonucleoside 5'-triphosphate = RNA(n+1) + diphosphate. In terms of biological role, DNA-dependent RNA polymerase catalyzes the transcription of DNA into RNA using the four ribonucleoside triphosphates as substrates. This chain is DNA-directed RNA polymerase subunit beta', found in Borrelia turicatae (strain 91E135).